A 108-amino-acid chain; its full sequence is Kanamycin resistance protein (108 aa).

The N-acetyltransferase domain occupies 1 to 99 (SRTLLLERGR…PAVYMVQTRQ (99 aa)).

This is Kanamycin resistance protein from Rhizobium radiobacter (Agrobacterium tumefaciens).